Reading from the N-terminus, the 441-residue chain is GTPase Der (441 aa).

EngA-type G domains lie at 3-167 (PLIA…PKGS) and 176-351 (TKIA…EQFA). GTP contacts are provided by residues 9–16 (GRPNVGKS), 56–60 (DTGGF), 119–122 (NKID), 182–189 (GRPNVGKS), 229–233 (DTAGI), and 294–297 (NKWD). Residues 352–436 (RRITTSDLNR…PMRLLFKGRE (85 aa)) enclose the KH-like domain.

Belongs to the TRAFAC class TrmE-Era-EngA-EngB-Septin-like GTPase superfamily. EngA (Der) GTPase family. In terms of assembly, associates with the 50S ribosomal subunit.

GTPase that plays an essential role in the late steps of ribosome biogenesis. The protein is GTPase Der of Geotalea uraniireducens (strain Rf4) (Geobacter uraniireducens).